The primary structure comprises 525 residues: CBL-interacting protein kinase 21 (525 aa).

Positions 87–342 constitute a Protein kinase domain; it reads YEMGRALGEG…ITGIRAHEWF (256 aa). Residues 93–101 and K116 contribute to the ATP site; that span reads LGEGHFGKV. The active-site Proton acceptor is D210. An activation loop region spans residues 228 to 257; it reads DFGLSALPQNQRKDGLLHTTCGSPNYIAPE. The NAF domain maps to 372–401; that stretch reads DIETSPAISQINAFQLIGMSSCLDLSGFFE. A PPI region spans residues 407-436; that stretch reads ERKIRFVSNYSPTSLFEKIESTVTEKGFQV.

It belongs to the protein kinase superfamily. CAMK Ser/Thr protein kinase family. SNF1 subfamily. It depends on Mn(2+) as a cofactor.

The enzyme catalyses L-seryl-[protein] + ATP = O-phospho-L-seryl-[protein] + ADP + H(+). The catalysed reaction is L-threonyl-[protein] + ATP = O-phospho-L-threonyl-[protein] + ADP + H(+). In terms of biological role, CIPK serine-threonine protein kinases interact with CBL proteins. Binding of a CBL protein to the regulatory NAF domain of CIPK protein lead to the activation of the kinase in a calcium-dependent manner. The sequence is that of CBL-interacting protein kinase 21 (CIPK21) from Oryza sativa subsp. japonica (Rice).